A 512-amino-acid chain; its full sequence is Lysine--tRNA ligase (512 aa).

Mg(2+)-binding residues include Glu408 and Glu415.

This sequence belongs to the class-II aminoacyl-tRNA synthetase family. Homodimer. Mg(2+) serves as cofactor.

Its subcellular location is the cytoplasm. The catalysed reaction is tRNA(Lys) + L-lysine + ATP = L-lysyl-tRNA(Lys) + AMP + diphosphate. In Prochlorococcus marinus (strain MIT 9215), this protein is Lysine--tRNA ligase.